The chain runs to 350 residues: Protein MGF 360-12L (350 aa).

Residues 57-89 (DLNTALVKAVRENNYNLIKLFAEWGANINYGLV) form an ANK repeat.

The protein belongs to the asfivirus MGF 360 family.

Its function is as follows. Plays a role in virus cell tropism, and may be required for efficient virus replication in macrophages. The sequence is that of Protein MGF 360-12L from Ornithodoros (relapsing fever ticks).